An 806-amino-acid chain; its full sequence is Fibroblast growth factor receptor 3 (806 aa).

Positions 1–19 are cleaved as a signal peptide; sequence MRAAWGSVWCLCLAAAVGA. Residues 20 to 364 lie on the Extracellular side of the membrane; it reads LPAARRRGAE…ELMEMDDSGS (345 aa). The Ig-like C2-type 1 domain maps to 24–124; sequence RRRGAERSGG…VLGNFTVRVT (101 aa). The cysteines at positions 61 and 107 are disulfide-linked. Asparagine 83, asparagine 96, and asparagine 118 each carry an N-linked (GlcNAc...) asparagine glycan. The interval 121 to 146 is disordered; it reads VRVTDSPSSGDDEDDDDESEDTGVPF. A compositionally biased stretch (acidic residues) spans 130-141; sequence GDDEDDDDESED. 2 Ig-like C2-type domains span residues 150–238 and 247–349; these read PDKM…YQLD and PILQ…AWLT. An intrachain disulfide couples cysteine 170 to cysteine 222. Asparagine 219, asparagine 256, asparagine 288, asparagine 309, and asparagine 322 each carry an N-linked (GlcNAc...) asparagine glycan. A disulfide bridge connects residues cysteine 269 and cysteine 333. A helical membrane pass occupies residues 365-389; the sequence is VYAGILSYGTGLVLFILVLVIVIIC. The Cytoplasmic segment spans residues 390–806; sequence RMKMPNKKAM…HVPCNGVIRT (417 aa). In terms of domain architecture, Protein kinase spans 466-755; that stretch reads LTLGKPLGEG…LTMTSTDEYL (290 aa). ATP contacts are provided by residues 472–480 and lysine 502; that span reads LGEGCFGQV. The Proton acceptor role is filled by aspartate 611. Residues tyrosine 641, tyrosine 642, tyrosine 718, and tyrosine 754 each carry the phosphotyrosine; by autocatalysis modification.

This sequence belongs to the protein kinase superfamily. Tyr protein kinase family. Fibroblast growth factor receptor subfamily. In terms of assembly, monomer. Homodimer after ligand binding. In terms of processing, autophosphorylated. Binding of FGF family members together with heparan sulfate proteoglycan or heparin promotes receptor dimerization and autophosphorylation on tyrosine residues. Autophosphorylation occurs in trans between the two FGFR molecules present in the dimer.

It localises to the cell membrane. It catalyses the reaction L-tyrosyl-[protein] + ATP = O-phospho-L-tyrosyl-[protein] + ADP + H(+). Its activity is regulated as follows. Present in an inactive conformation in the absence of bound ligand. Ligand binding leads to dimerization and activation by autophosphorylation on tyrosine residues. Tyrosine-protein kinase that acts as a cell-surface receptor for fibroblast growth factors and plays an essential role in the regulation of cell proliferation, differentiation and apoptosis. Plays an essential role in the regulation of chondrocyte differentiation, proliferation and apoptosis, and is required for normal skeleton development. Regulates both osteogenesis and postnatal bone mineralization by osteoblasts. Promotes apoptosis in chondrocytes, but can also promote cancer cell proliferation. Phosphorylates PLCG1, CBL and FRS2. Ligand binding leads to the activation of several signaling cascades. Activation of PLCG1 leads to the production of the cellular signaling molecules diacylglycerol and inositol 1,4,5-trisphosphate. Phosphorylation of FRS2 triggers recruitment of GRB2, GAB1, PIK3R1 and SOS1, and mediates activation of RAS, MAPK1/ERK2, MAPK3/ERK1 and the MAP kinase signaling pathway, as well as of the AKT1 signaling pathway. The polypeptide is Fibroblast growth factor receptor 3 (FGFR3) (Gallus gallus (Chicken)).